Here is a 255-residue protein sequence, read N- to C-terminus: MTSIDLNCDLGEGFGPWQMGNDAAMIELATSVNIACGFHAGDADIMHQTVKLAKARGVAVGAHPGFRDLHGFGRRPVPGITAAEIENLVAYQIGALQAVAALAGHKVSHVKAHGALSNVACEDDMTARAIAAAIKAVDPKLVFVVLASSKLQTAGEAAGLTLAHEVFADRAYEDDATLVSRKKPGAVLHDPIEIAERVLRMVQDGAVLSVTGKLIKLRTDTVCIHGDTAGAVEIARGLRARLAQAGITVAPFARG.

The protein belongs to the LamB/PxpA family. As to quaternary structure, forms a complex composed of PxpA, PxpB and PxpC.

The catalysed reaction is 5-oxo-L-proline + ATP + 2 H2O = L-glutamate + ADP + phosphate + H(+). In terms of biological role, catalyzes the cleavage of 5-oxoproline to form L-glutamate coupled to the hydrolysis of ATP to ADP and inorganic phosphate. The polypeptide is 5-oxoprolinase subunit A (Rhodopseudomonas palustris (strain BisA53)).